The following is a 409-amino-acid chain: Argininosuccinate synthase (409 aa).

ATP-binding positions include 8 to 16 (AYSGGLDTS) and Ala34. L-citrulline is bound at residue Tyr85. Gly115 serves as a coordination point for ATP. L-aspartate contacts are provided by Thr117, Asn121, and Asp122. Residue Asn121 participates in L-citrulline binding. Residues Arg125, Ser178, Ser187, Glu268, and Tyr280 each contribute to the L-citrulline site.

The protein belongs to the argininosuccinate synthase family. Type 1 subfamily. In terms of assembly, homotetramer.

It localises to the cytoplasm. The catalysed reaction is L-citrulline + L-aspartate + ATP = 2-(N(omega)-L-arginino)succinate + AMP + diphosphate + H(+). Its pathway is amino-acid biosynthesis; L-arginine biosynthesis; L-arginine from L-ornithine and carbamoyl phosphate: step 2/3. In Thermotoga maritima (strain ATCC 43589 / DSM 3109 / JCM 10099 / NBRC 100826 / MSB8), this protein is Argininosuccinate synthase.